Consider the following 352-residue polypeptide: Ion-translocating oxidoreductase complex subunit D (352 aa).

A run of 4 helical transmembrane segments spans residues 20 to 40, 42 to 62, 89 to 109, and 123 to 143; these read IMLL…WFFG, GTLV…ALVL, IPPL…VIIA, and PAMI…TSWL. Threonine 187 is subject to FMN phosphoryl threonine. 5 helical membrane-spanning segments follow: residues 214–234, 242–262, 267–287, 301–321, and 322–342; these read ILAG…GLWL, WHIP…GWLF, LAAP…FFIL, LIFG…GGYP, and DGVA…DYYT.

It belongs to the NqrB/RnfD family. As to quaternary structure, the complex is composed of six subunits: RsxA, RsxB, RsxC, RsxD, RsxE and RsxG. FMN serves as cofactor.

Its subcellular location is the cell inner membrane. Part of a membrane-bound complex that couples electron transfer with translocation of ions across the membrane. Required to maintain the reduced state of SoxR. The chain is Ion-translocating oxidoreductase complex subunit D from Shigella sonnei (strain Ss046).